The following is a 544-amino-acid chain: Chaperonin GroEL 1 (544 aa).

ATP contacts are provided by residues 29–32 (TLGP), 86–90 (DGTTT), Gly-413, 482–484 (NVL), and Asp-498.

This sequence belongs to the chaperonin (HSP60) family. In terms of assembly, forms a cylinder of 14 subunits composed of two heptameric rings stacked back-to-back. Interacts with the co-chaperonin GroES.

It is found in the cytoplasm. The catalysed reaction is ATP + H2O + a folded polypeptide = ADP + phosphate + an unfolded polypeptide.. In terms of biological role, together with its co-chaperonin GroES, plays an essential role in assisting protein folding. The GroEL-GroES system forms a nano-cage that allows encapsulation of the non-native substrate proteins and provides a physical environment optimized to promote and accelerate protein folding. The chain is Chaperonin GroEL 1 from Chloroflexus aurantiacus (strain ATCC 29366 / DSM 635 / J-10-fl).